We begin with the raw amino-acid sequence, 498 residues long: PE-PGRS family protein PE_PGRS33 (498 aa).

An essential for translocation to the cell surface region spans residues 1 to 30 (MSFVVTIPEALAAVATDLAGIGSTIGTANA). Residues 1 to 93 (MSFVVTIPEA…AGSYAAAEAA (93 aa)) enclose the PE domain. Residues 140–260 (GNGGAGGSGA…GLFFGVGGAG (121 aa)) are interacts with TLR2.

Belongs to the mycobacterial PE family. PGRS subfamily. As to quaternary structure, interacts with human TLR2.

The protein resides in the secreted. It is found in the cell wall. It localises to the cell surface. The protein localises to the cell outer membrane. Its activity is regulated as follows. Binding of Ca(2+) to PE_PGRS33 induces conformational changes and increases affinity for TLR2. Functionally, induces TNF-alpha release through human Toll-like receptor 2 (TLR2) signaling pathway, leading to macrophage apoptosis. The signaling pathway involves TLR2-dependent activation of the mitogen-activated protein kinase kinase kinase 5 (ASK1), which activates the p38 and JNK MAPKs, leading to enhanced expression of TNF-alpha and tumor necrosis factor receptor superfamily member 1A (TNFRI) genes. Signals are amplified through classical caspase 8-dependent mitochondrial release of cytochrome c, leading to the activation of caspases 9 and 3. Mediates Ca(2+)-dependent up-regulation of the anti-inflammatory cytokine IL-10. Mediates entry into macrophages in a TLR2-dependent mechanism and activates the TLR2-dependent pro-adhesive pathway. The protein is PE-PGRS family protein PE_PGRS33 of Mycobacterium tuberculosis (strain ATCC 25618 / H37Rv).